Consider the following 92-residue polypeptide: Cell division topological specificity factor (92 aa).

Belongs to the MinE family.

In terms of biological role, prevents the cell division inhibition by proteins MinC and MinD at internal division sites while permitting inhibition at polar sites. This ensures cell division at the proper site by restricting the formation of a division septum at the midpoint of the long axis of the cell. The polypeptide is Cell division topological specificity factor (Symbiobacterium thermophilum (strain DSM 24528 / JCM 14929 / IAM 14863 / T)).